The chain runs to 469 residues: Sulfate adenylyltransferase subunit 1 (469 aa).

Residues 22 to 237 form the tr-type G domain; that stretch reads KEVLRFITCG…LEEVPVKSEE (216 aa). The G1 stretch occupies residues 31–38; it reads GSVDDGKS. 31-38 contributes to the GTP binding site; that stretch reads GSVDDGKS. Residues 89–93 form a G2 region; it reads GITID. Positions 110-113 are G3; it reads DTPG. GTP contacts are provided by residues 110–114 and 165–168; these read DTPGH and NKMD. The segment at 165–168 is G4; that stretch reads NKMD. Positions 202 to 204 are G5; sequence SAK.

Belongs to the TRAFAC class translation factor GTPase superfamily. Classic translation factor GTPase family. CysN/NodQ subfamily. Heterodimer composed of CysD, the smaller subunit, and CysN.

The enzyme catalyses sulfate + ATP + H(+) = adenosine 5'-phosphosulfate + diphosphate. It participates in sulfur metabolism; hydrogen sulfide biosynthesis; sulfite from sulfate: step 1/3. Functionally, with CysD forms the ATP sulfurylase (ATPS) that catalyzes the adenylation of sulfate producing adenosine 5'-phosphosulfate (APS) and diphosphate, the first enzymatic step in sulfur assimilation pathway. APS synthesis involves the formation of a high-energy phosphoric-sulfuric acid anhydride bond driven by GTP hydrolysis by CysN coupled to ATP hydrolysis by CysD. The chain is Sulfate adenylyltransferase subunit 1 from Methylorubrum extorquens (strain CM4 / NCIMB 13688) (Methylobacterium extorquens).